A 158-amino-acid polypeptide reads, in one-letter code: Complexin-3 (158 aa).

Residues 14 to 47 (KNLTGSLGGGEDKGDGDKSAAEAQGMSREEYEEY) are disordered. Basic and acidic residues predominate over residues 23 to 33 (GEDKGDGDKSA). Residues 39–74 (MSREEYEEYQKQLVEEKMERDAQFTQRKAERATLRS) adopt a coiled-coil conformation. At cysteine 155 the chain carries Cysteine methyl ester. Cysteine 155 carries the S-farnesyl cysteine lipid modification. A propeptide spans 156–158 (HIM) (removed in mature form).

This sequence belongs to the complexin/synaphin family. Binds to the SNARE core complex containing SNAP25, VAMP2 and STX1A. In terms of processing, farnesylation mediates presynaptic targeting. In terms of tissue distribution, present in many brain regions, including hippocampus and cerebellum (at protein level). Expressed in the retina (at protein level). Expressed in retinal amacrine cells (at protein level). Expressed in retinal photoreceptor ribbon synapses. Expressed in the retinal inner nuclear layer, at bipolar cells (at protein level). Expressed in cone photoreceptor synaptic terminals (at protein level).

It localises to the synapse. The protein resides in the cell membrane. Complexin that regulates SNARE protein complex-mediated synaptic vesicle fusion. Required for the maintenance of synaptic ultrastructure in the adult retina. Positively regulates synaptic transmission through synaptic vesicle availability and exocytosis of neurotransmitters at photoreceptor ribbon synapses in the retina. Suppresses tonic photoreceptor activity and baseline 'noise' by suppression of Ca(2+) vesicle tonic release and the facilitation of evoked synchronous and asynchronous Ca(2+) vesicle release. The chain is Complexin-3 (Cplx3) from Mus musculus (Mouse).